Reading from the N-terminus, the 252-residue chain is Octanoyltransferase (252 aa).

Residues 56–237 enclose the BPL/LPL catalytic domain; it reads ADTGDEIWLV…RLIANLDGAS (182 aa). Substrate-binding positions include 96–103, 168–170, and 181–183; these read RGGQITYH, ALG, and GLS. The Acyl-thioester intermediate role is filled by C199.

It belongs to the LipB family.

The protein resides in the cytoplasm. It catalyses the reaction octanoyl-[ACP] + L-lysyl-[protein] = N(6)-octanoyl-L-lysyl-[protein] + holo-[ACP] + H(+). The protein operates within protein modification; protein lipoylation via endogenous pathway; protein N(6)-(lipoyl)lysine from octanoyl-[acyl-carrier-protein]: step 1/2. Catalyzes the transfer of endogenously produced octanoic acid from octanoyl-acyl-carrier-protein onto the lipoyl domains of lipoate-dependent enzymes. Lipoyl-ACP can also act as a substrate although octanoyl-ACP is likely to be the physiological substrate. This is Octanoyltransferase from Burkholderia lata (strain ATCC 17760 / DSM 23089 / LMG 22485 / NCIMB 9086 / R18194 / 383).